The chain runs to 458 residues: tRNA modification GTPase MnmE (458 aa).

(6S)-5-formyl-5,6,7,8-tetrahydrofolate-binding residues include Arg-32, Glu-89, and Lys-128. A TrmE-type G domain is found at Gly-224–Gly-381. Asn-234 contributes to the K(+) binding site. Residues Asn-234 to Ser-239, Thr-253 to Thr-259, and Asp-278 to Gly-281 contribute to the GTP site. A Mg(2+)-binding site is contributed by Ser-238. Residues Thr-253, Val-255, and Thr-258 each contribute to the K(+) site. Thr-259 contacts Mg(2+). Lys-458 is a (6S)-5-formyl-5,6,7,8-tetrahydrofolate binding site.

This sequence belongs to the TRAFAC class TrmE-Era-EngA-EngB-Septin-like GTPase superfamily. TrmE GTPase family. As to quaternary structure, homodimer. Heterotetramer of two MnmE and two MnmG subunits. Requires K(+) as cofactor.

It localises to the cytoplasm. Functionally, exhibits a very high intrinsic GTPase hydrolysis rate. Involved in the addition of a carboxymethylaminomethyl (cmnm) group at the wobble position (U34) of certain tRNAs, forming tRNA-cmnm(5)s(2)U34. The chain is tRNA modification GTPase MnmE from Nitrosococcus oceani (strain ATCC 19707 / BCRC 17464 / JCM 30415 / NCIMB 11848 / C-107).